Reading from the N-terminus, the 286-residue chain is Large ribosomal subunit protein uL4m (286 aa).

The N-terminal 26 residues, 1-26, are a transit peptide targeting the mitochondrion; sequence MTIKRNLVKTLQSIRYQATTATAHAE. A disordered region spans residues 85–132; that stretch reads RRVGASNPPGRSENGFSRRKLMPQKGSGRARVGDANSPTRHNGGRALA.

This sequence belongs to the universal ribosomal protein uL4 family. As to quaternary structure, component of the mitochondrial large ribosomal subunit (mt-LSU). Mature yeast 74S mitochondrial ribosomes consist of a small (37S) and a large (54S) subunit. The 37S small subunit contains a 15S ribosomal RNA (15S mt-rRNA) and 34 different proteins. The 54S large subunit contains a 21S rRNA (21S mt-rRNA) and 46 different proteins.

The protein localises to the mitochondrion. Functionally, component of the mitochondrial ribosome (mitoribosome), a dedicated translation machinery responsible for the synthesis of mitochondrial genome-encoded proteins, including at least some of the essential transmembrane subunits of the mitochondrial respiratory chain. The mitoribosomes are attached to the mitochondrial inner membrane and translation products are cotranslationally integrated into the membrane. This is Large ribosomal subunit protein uL4m (YML6) from Saccharomyces cerevisiae (strain ATCC 204508 / S288c) (Baker's yeast).